Reading from the N-terminus, the 256-residue chain is Osteocalcin 2 (256 aa).

Positions 1–18 (MKTLVLLSICALLSVCWS) are cleaved as a signal peptide. The propeptide occupies 19 to 209 (MGAVEPEVVV…LASVLLRRRR (191 aa)). Over residues 38–186 (AAPADPAAAA…SSSSSSSSES (149 aa)) the composition is skewed to low complexity. The tract at residues 38–193 (AAPADPAAAA…SESASDEAAK (156 aa)) is disordered. Positions 218-252 (PLQLESLREVCELNIACDEMAETAGIVAAYVAYYG) constitute a Gla domain. 4 residues coordinate Ca(2+): Glu222, Glu226, Glu229, and Asp235. 4-carboxyglutamate is present on residues Glu222, Glu226, and Glu229. A disulfide bridge links Cys228 with Cys234. Glu236 is subject to 4-carboxyglutamate.

Belongs to the osteocalcin/matrix Gla protein family. Gamma-carboxyglutamate residues are formed by vitamin K dependent carboxylation by GGCX. These residues are essential for the binding of calcium.

The protein localises to the secreted. In terms of biological role, the carboxylated form is one of the main organic components of the bone matrix, which constitutes 1-2% of the total bone protein. The carboxylated form binds strongly to apatite and calcium. The sequence is that of Osteocalcin 2 from Diplodus sargus (White seabream).